A 271-amino-acid polypeptide reads, in one-letter code: Urease accessory protein UreD (271 aa).

It belongs to the UreD family. UreD, UreF and UreG form a complex that acts as a GTP-hydrolysis-dependent molecular chaperone, activating the urease apoprotein by helping to assemble the nickel containing metallocenter of UreC. The UreE protein probably delivers the nickel.

Its subcellular location is the cytoplasm. Its function is as follows. Required for maturation of urease via the functional incorporation of the urease nickel metallocenter. The polypeptide is Urease accessory protein UreD (Bacillus sp. (strain TB-90)).